The sequence spans 503 residues: uncharacterized protein (503 aa).

Disordered stretches follow at residues 1–26 (MADDEDDIVWIREDTAQSSVPTSPTT) and 132–156 (DQQQNDQLSAKLDPKTPNSVDDNSM). A compositionally biased stretch (low complexity) spans 16–26 (AQSSVPTSPTT). Residues 147–156 (TPNSVDDNSM) are compositionally biased toward polar residues.

This is an uncharacterized protein from Caenorhabditis elegans.